Here is a 529-residue protein sequence, read N- to C-terminus: Lanosterol 14-alpha demethylase (529 aa).

C468 is a heme binding site.

The protein belongs to the cytochrome P450 family. It depends on heme as a cofactor.

It is found in the membrane. It catalyses the reaction a 14alpha-methyl steroid + 3 reduced [NADPH--hemoprotein reductase] + 3 O2 = a Delta(14) steroid + formate + 3 oxidized [NADPH--hemoprotein reductase] + 4 H2O + 4 H(+). The enzyme catalyses a 14alpha-methyl steroid + reduced [NADPH--hemoprotein reductase] + O2 = a 14alpha-hydroxymethyl steroid + oxidized [NADPH--hemoprotein reductase] + H2O + H(+). The catalysed reaction is a 14alpha-hydroxymethyl steroid + reduced [NADPH--hemoprotein reductase] + O2 = a 14alpha-formyl steroid + oxidized [NADPH--hemoprotein reductase] + 2 H2O + H(+). It carries out the reaction a 14alpha-formyl steroid + reduced [NADPH--hemoprotein reductase] + O2 = a Delta(14) steroid + formate + oxidized [NADPH--hemoprotein reductase] + H2O + 2 H(+). It catalyses the reaction lanosterol + 3 reduced [NADPH--hemoprotein reductase] + 3 O2 = 4,4-dimethyl-5alpha-cholesta-8,14,24-trien-3beta-ol + formate + 3 oxidized [NADPH--hemoprotein reductase] + 4 H2O + 4 H(+). The enzyme catalyses lanosterol + reduced [NADPH--hemoprotein reductase] + O2 = 32-hydroxylanosterol + oxidized [NADPH--hemoprotein reductase] + H2O + H(+). The catalysed reaction is 32-hydroxylanosterol + reduced [NADPH--hemoprotein reductase] + O2 = 32-oxolanosterol + oxidized [NADPH--hemoprotein reductase] + 2 H2O + H(+). It carries out the reaction 32-oxolanosterol + reduced [NADPH--hemoprotein reductase] + O2 = 4,4-dimethyl-5alpha-cholesta-8,14,24-trien-3beta-ol + formate + oxidized [NADPH--hemoprotein reductase] + H2O + 2 H(+). It catalyses the reaction eburicol + 3 reduced [NADPH--hemoprotein reductase] + 3 O2 = 14-demethyleburicol + formate + 3 oxidized [NADPH--hemoprotein reductase] + 4 H2O + 4 H(+). The enzyme catalyses eburicol + reduced [NADPH--hemoprotein reductase] + O2 = 32-hydroxyeburicol + oxidized [NADPH--hemoprotein reductase] + H2O + H(+). The catalysed reaction is 32-hydroxyeburicol + reduced [NADPH--hemoprotein reductase] + O2 = 32-oxoeburicol + oxidized [NADPH--hemoprotein reductase] + 2 H2O + H(+). It carries out the reaction 32-oxoeburicol + reduced [NADPH--hemoprotein reductase] + O2 = 14-demethyleburicol + formate + oxidized [NADPH--hemoprotein reductase] + H2O + 2 H(+). It participates in steroid biosynthesis; zymosterol biosynthesis; zymosterol from lanosterol: step 1/6. In terms of biological role, sterol 14alpha-demethylase that plays a critical role in the third module of ergosterol biosynthesis pathway, being ergosterol the major sterol component in fungal membranes that participates in a variety of functions. The third module or late pathway involves the ergosterol synthesis itself through consecutive reactions that mainly occur in the endoplasmic reticulum (ER) membrane. In filamentous fungi, during the initial step of this module, lanosterol (lanosta-8,24-dien-3beta-ol) can be metabolized to eburicol. Sterol 14alpha-demethylase catalyzes the three-step oxidative removal of the 14alpha-methyl group (C-32) of both these sterols in the form of formate, and converts eburicol and lanosterol to 14-demethyleburicol (4,4,24-trimethylergosta-8,14,24(28)-trienol) and 4,4-dimethyl-5alpha-cholesta-8,14,24-trien-3beta-ol, respectively, which are further metabolized by other enzymes in the pathway to ergosterol. Can also use substrates not intrinsic to fungi, such as 24,25-dihydrolanosterol (DHL), producing 4,4-dimethyl-8,14-cholestadien-3-beta-ol, but at lower rates than the endogenous substrates. The sequence is that of Lanosterol 14-alpha demethylase (ERG11) from Eremothecium gossypii (strain ATCC 10895 / CBS 109.51 / FGSC 9923 / NRRL Y-1056) (Yeast).